The primary structure comprises 195 residues: Probable molybdenum cofactor guanylyltransferase (195 aa).

Residues 8-10 (LSG), K20, D65, and D96 each bind GTP. D96 is a Mg(2+) binding site.

This sequence belongs to the MobA family. The cofactor is Mg(2+).

Its subcellular location is the cytoplasm. It catalyses the reaction Mo-molybdopterin + GTP + H(+) = Mo-molybdopterin guanine dinucleotide + diphosphate. Its function is as follows. Transfers a GMP moiety from GTP to Mo-molybdopterin (Mo-MPT) cofactor (Moco or molybdenum cofactor) to form Mo-molybdopterin guanine dinucleotide (Mo-MGD) cofactor. The sequence is that of Probable molybdenum cofactor guanylyltransferase from Bacillus licheniformis (strain ATCC 14580 / DSM 13 / JCM 2505 / CCUG 7422 / NBRC 12200 / NCIMB 9375 / NCTC 10341 / NRRL NRS-1264 / Gibson 46).